A 342-amino-acid polypeptide reads, in one-letter code: S-adenosylmethionine:tRNA ribosyltransferase-isomerase (342 aa).

Belongs to the QueA family. In terms of assembly, monomer.

The protein resides in the cytoplasm. The enzyme catalyses 7-aminomethyl-7-carbaguanosine(34) in tRNA + S-adenosyl-L-methionine = epoxyqueuosine(34) in tRNA + adenine + L-methionine + 2 H(+). Its pathway is tRNA modification; tRNA-queuosine biosynthesis. Its function is as follows. Transfers and isomerizes the ribose moiety from AdoMet to the 7-aminomethyl group of 7-deazaguanine (preQ1-tRNA) to give epoxyqueuosine (oQ-tRNA). The polypeptide is S-adenosylmethionine:tRNA ribosyltransferase-isomerase (Shouchella clausii (strain KSM-K16) (Alkalihalobacillus clausii)).